The primary structure comprises 1141 residues: IgM protease (1141 aa).

The first 32 residues, 1 to 32 (MNIQERFSLRKSAVGLVSVSLLCAIYTSTVAA), serve as a signal peptide directing secretion. Catalysis depends on Cys195, which acts as the Nucleophile. Disordered regions lie at residues 518–544 (PDLP…STNL), 725–749 (EKDS…NVET), 781–805 (LEKD…TNVE), and 839–860 (EKDS…ESTS). Polar residues predominate over residues 526–544 (STVSDVDSLSSQETSSTNL). Composition is skewed to low complexity over residues 738–749 (EPTSSESTNVET) and 795–805 (EPTSSESTNVE). Residues 1119 to 1136 (IMGVGLLTLVLGSALGLL) form a helical membrane-spanning segment.

The protein belongs to the peptidase C66 family.

It localises to the cell membrane. The protein localises to the secreted. With respect to regulation, igM cleavage is inhibited by iodoacetamide but not by AEBSF, bestatin, E-64, Z-LVG-CHN(2), or EDTA. Functionally, catalyzes the specific cleavage of porcine IgM bound to the bacterial surface. Can degrade only IgM but neither IgG nor IgA, and is host specific, as it exclusively cleaves porcine IgM but not IgM from six other species, including human, mouse and a closely related member of the Suidae family. Promotes survival in porcine blood. Is thus involved in a so-far-unknown mechanism of host-pathogen interaction at an early stage of the host immune response. In Streptococcus suis (strain P1/7), this protein is IgM protease (ide).